Reading from the N-terminus, the 517-residue chain is Glycoprotein (517 aa).

The signal sequence occupies residues 1-16 (MLSYLIFALAVSPILG). Residues 17 to 474 (KIEIVFPQHT…FSGWRSSLMG (458 aa)) lie on the Virion surface side of the membrane. Intrachain disulfides connect Cys-40–Cys-304, Cys-75–Cys-108, Cys-84–Cys-130, Cys-169–Cys-174, Cys-193–Cys-240, and Cys-235–Cys-273. The interval 53 to 172 (TGIPVELTMP…HFIGGRCKGQ (120 aa)) is fusion peptide. Asn-179 carries an N-linked (GlcNAc...) asparagine; by host glycan. Positions 259 to 313 (DLDKTVRDLPHIKDCDLSSSIITPGEHATDISLISDVERILDYALCQNTWSKIES) are trimerization. N-linked (GlcNAc...) asparagine; by host glycosylation occurs at Asn-340. Positions 387 to 409 (EIGPNGVLKTKQGYKFPLHIIGT) are trimerization. The helical transmembrane segment at 475–495 (VLAVIIGFVILMFLIKLIGVL) threads the bilayer. Residues 496-517 (SSLFRPKRRPIYKSDVEMAHFR) lie on the Intravirion side of the membrane.

The protein belongs to the vesiculovirus glycoprotein family. As to quaternary structure, homotrimer. Interacts with host LDL at target cell surface. Glycosylated by host. Palmitoylated by host.

The protein resides in the virion membrane. It localises to the host membrane. Functionally, attaches the virus to host LDL receptors, inducing clathrin-dependent endocytosis of the virion. In the endosome, the acidic pH induces conformational changes in the glycoprotein trimer, which trigger fusion between virus and endosomal membrane. This is Glycoprotein (G) from Aedes (Bovine).